A 117-amino-acid chain; its full sequence is Large ribosomal subunit protein bL19 (117 aa).

It belongs to the bacterial ribosomal protein bL19 family.

This protein is located at the 30S-50S ribosomal subunit interface and may play a role in the structure and function of the aminoacyl-tRNA binding site. This Aliivibrio fischeri (strain ATCC 700601 / ES114) (Vibrio fischeri) protein is Large ribosomal subunit protein bL19.